The sequence spans 423 residues: Citrate synthase-like protein clz17 (423 aa).

Catalysis depends on residues H357 and D413.

It belongs to the citrate synthase family.

Its pathway is secondary metabolite biosynthesis. Functionally, citrate synthase-like protein; part of the gene cluster that mediates the biosynthesis of squalestatin S1 (SQS1, also known as zaragozic acid A), a heavily oxidized fungal polyketide that offers potent cholesterol lowering activity by targeting squalene synthase (SS). SQS1 is composed of a 2,8-dioxobicyclic[3.2.1]octane-3,4,5-tricarboxyclic acid core that is connected to two lipophilic polyketide arms. These initial steps feature the priming of an unusual benzoic acid starter unit onto the highly reducing polyketide synthase clz14, followed by oxaloacetate extension and product release to generate a tricarboxylic acid containing product. The phenylalanine ammonia lyase (PAL) clz10 and the acyl-CoA ligase clz12 are involved in transforming phenylalanine into benzoyl-CoA. The citrate synthase-like protein clz17 is involved in connecting the C-alpha-carbons of the hexaketide chain and oxaloacetate to afford the tricarboxylic acid unit. The potential hydrolytic enzymes, clz11 and clz13, are in close proximity to pks2 and may participate in product release. On the other side, the tetraketide arm is synthesized by a the squalestatin tetraketide synthase clz2 and enzymatically esterified to the core in the last biosynthetic step, by the acetyltransferase clz6. The biosynthesis of the tetraketide must involve 3 rounds of chain extension. After the first and second rounds methyl-transfer occurs, and in all rounds of extension the ketoreductase and dehydratase are active. The enoyl reductase and C-MeT of clz2 are not active in the final round of extension. The acetyltransferase clz6 appears to have a broad substrate selectivity for its acyl CoA substrate, allowing the in vitro synthesis of novel squalestatins. The biosynthesis of SQS1 requires several oxidative steps likely performed by oxidoreductases clz3, clz15 and clz16. Finally, in support of the identification of the cluster as being responsible for SQS1 production, the cluster contains a gene encoding a putative squalene synthase (SS) clz20, suggesting a likely mechanism for self-resistance. This is Citrate synthase-like protein clz17 from Cochliobolus lunatus (Filamentous fungus).